A 227-amino-acid chain; its full sequence is Lipoprotein-releasing system ATP-binding protein LolD (227 aa).

An ABC transporter domain is found at 6-227 (LVLDDIQKSY…RLDEGVLVSA (222 aa)). 43–50 (APSGAGKS) serves as a coordination point for ATP.

The protein belongs to the ABC transporter superfamily. Lipoprotein translocase (TC 3.A.1.125) family. In terms of assembly, the complex is composed of two ATP-binding proteins (LolD) and two transmembrane proteins (LolC and LolE).

The protein localises to the cell inner membrane. Part of the ABC transporter complex LolCDE involved in the translocation of mature outer membrane-directed lipoproteins, from the inner membrane to the periplasmic chaperone, LolA. Responsible for the formation of the LolA-lipoprotein complex in an ATP-dependent manner. In Jannaschia sp. (strain CCS1), this protein is Lipoprotein-releasing system ATP-binding protein LolD.